The chain runs to 180 residues: O-acetyl-ADP-ribose deacetylase (180 aa).

One can recognise a Macro domain in the interval 1 to 175 (MKPQIEVVVG…LYQRLLIQRG (175 aa)). Substrate-binding positions include 11–12 (DI), asparagine 25, 33–35 (GVD), and 122–126 (STGVY). Aspartate 35 functions as the Proton acceptor in the catalytic mechanism.

It belongs to the MacroD-type family. YmdB subfamily. Homodimer. Interacts with RNase III.

The catalysed reaction is 3''-O-acetyl-ADP-D-ribose + H2O = ADP-D-ribose + acetate + H(+). It catalyses the reaction 2''-O-acetyl-ADP-D-ribose + H2O = ADP-D-ribose + acetate + H(+). Its function is as follows. Deacetylates O-acetyl-ADP ribose to yield ADP-ribose and free acetate. Down-regulates ribonuclease 3 (RNase III) activity. Acts by interacting directly with the region of the ribonuclease that is required for dimerization/activation. The sequence is that of O-acetyl-ADP-ribose deacetylase from Enterobacter sp. (strain 638).